We begin with the raw amino-acid sequence, 334 residues long: Mitochondrial ribosome-associated GTPase 1 (334 aa).

One can recognise a CP-type G domain in the interval 36 to 209 (AKGLKKMQSS…LLDTPGVLAP (174 aa)). Residues 83-86 (NKMD), 153-158 (NVGKSS), and glycine 205 each bind GTP.

It belongs to the TRAFAC class YlqF/YawG GTPase family. MTG1 subfamily. As to quaternary structure, associates with the mitochondrial ribosome large subunit; the association occurs in a GTP-dependent manner.

It is found in the mitochondrion inner membrane. Its function is as follows. Plays a role in the regulation of the mitochondrial ribosome assembly and of translational activity. Displays mitochondrial GTPase activity. The chain is Mitochondrial ribosome-associated GTPase 1 (MTG1) from Homo sapiens (Human).